The chain runs to 689 residues: DNA ligase (689 aa).

Residues 35 to 39 (DEVYD), 84 to 85 (SL), and Glu-122 each bind NAD(+). The active-site N6-AMP-lysine intermediate is the Lys-124. Residues Arg-145, Glu-182, Lys-308, and Lys-332 each coordinate NAD(+). The Zn(2+) site is built by Cys-426, Cys-429, Cys-444, and Cys-449. Residues 612 to 689 (TTEKSLNGKR…NETELIQMCR (78 aa)) form the BRCT domain.

It belongs to the NAD-dependent DNA ligase family. LigA subfamily. It depends on Mg(2+) as a cofactor. Requires Mn(2+) as cofactor.

It carries out the reaction NAD(+) + (deoxyribonucleotide)n-3'-hydroxyl + 5'-phospho-(deoxyribonucleotide)m = (deoxyribonucleotide)n+m + AMP + beta-nicotinamide D-nucleotide.. Functionally, DNA ligase that catalyzes the formation of phosphodiester linkages between 5'-phosphoryl and 3'-hydroxyl groups in double-stranded DNA using NAD as a coenzyme and as the energy source for the reaction. It is essential for DNA replication and repair of damaged DNA. The sequence is that of DNA ligase from Thermosynechococcus vestitus (strain NIES-2133 / IAM M-273 / BP-1).